Here is a 97-residue protein sequence, read N- to C-terminus: Small ribosomal subunit protein bS20c (97 aa).

Polar residues predominate over residues 1 to 15; it reads MSKNVSAIKKNQVSL. Positions 1–20 are disordered; the sequence is MSKNVSAIKKNQVSLRNKRK.

It belongs to the bacterial ribosomal protein bS20 family.

The protein localises to the plastid. Its subcellular location is the chloroplast. In terms of biological role, binds directly to 16S ribosomal RNA. The sequence is that of Small ribosomal subunit protein bS20c from Gracilaria tenuistipitata var. liui (Red alga).